The primary structure comprises 487 residues: b(0,+)-type amino acid transporter 1 (487 aa).

Positions 1–20 (MEETSLRRRREDEKSTHSTE) are disordered. The Cytoplasmic portion of the chain corresponds to 1-31 (MEETSLRRRREDEKSTHSTELKTTSLQKEVG). Serine 18 carries the phosphoserine modification. The helical transmembrane segment at 32-55 (LLSGICIIVGTIIGSGIFISPKSV) threads the bilayer. Residue 43 to 47 (IIGSG) coordinates L-arginine. At 56–62 (LANTESV) the chain is on the extracellular side. Residues 63–84 (GPCLIIWAACGILATLGALCFA) traverse the membrane as a helical segment. Residues 85 to 110 (ELGTMITKSGGEYPYLMEAFGPIPAY) are Cytoplasmic-facing. The chain crosses the membrane as a helical span at residues 111-137 (LFSWTSLIVMKPSSFAIICLSFSEYVC). The Extracellular portion of the chain corresponds to 138–147 (AAFYSGCKPP). Helical transmembrane passes span 148–169 (AVVVKLLAAAAILFITTVNALS) and 170–193 (VRLGSYVQNVFTAAKMVIVAIIII). Residues 194–217 (SGLVFLAQGNVKNFQNSFEGTQTS) are Extracellular-facing. A helical transmembrane segment spans residues 218–238 (VGAISLAFYNGLWAYDGWNQL). L-arginine is bound at residue aspartate 233. Topologically, residues 239–251 (NYITEELRNPYRN) are cytoplasmic. Residues 252–274 (LPMAIVIGIPLVTVCYILMNIAY) traverse the membrane as a helical segment. At 275–302 (FTVMTPTELLQSQAVAVTFGDRVLYPAS) the chain is on the extracellular side. Residues 303-325 (WVVPLFVAFSTIGAANGTCFTAG) form a helical membrane-spanning segment. Residues 326–351 (RLIYVAGREGHMLKVLSYISVKRLTP) are Cytoplasmic-facing. A run of 2 helical transmembrane segments spans residues 352–370 (APALIFYGIIAIIYIIPGD) and 371–391 (INSLVNYFSFAAWLFYGMTIL). At 392-410 (GLVVMRFTRKDLERPIKVP) the chain is on the cytoplasmic side. The chain crosses the membrane as a helical span at residues 411–431 (LFIPIIVILVSLFLILAPIIS). Over 432–434 (EPA) the chain is Extracellular. Residues 435–450 (WEYLYCVLFILSGLIF) traverse the membrane as a helical segment. The Cytoplasmic segment spans residues 451-487 (YFLFVYYKFGWAQRISRPVTKHLQMLMEVVPPEKDPE).

Belongs to the amino acid-polyamine-organocation (APC) superfamily. Disulfide-linked heterodimer composed of the catalytic light chain subunit SLC7A9 and the heavy chain subunit SLC3A1. The heterodimer is the minimal functional unit. Assembles in heterotetramers (dimers of heterodimers) and higher order oligomers; the oligomerization is mediated by SLC3A1 likely to prevent degradation and facilitate heteromer trafficking to the plasma membrane. Interacts with CAV1. As to expression, expressed in the brush border membrane in the kidney (at protein level).

Its subcellular location is the apical cell membrane. It catalyses the reaction L-leucine(out) + L-arginine(in) = L-leucine(in) + L-arginine(out). The enzyme catalyses L-histidine(out) + L-arginine(in) = L-histidine(in) + L-arginine(out). It carries out the reaction L-arginine(in) + L-phenylalanine(out) = L-arginine(out) + L-phenylalanine(in). The catalysed reaction is L-cysteine(out) + L-arginine(in) = L-cysteine(in) + L-arginine(out). It catalyses the reaction L-cystine(out) + L-arginine(in) = L-cystine(in) + L-arginine(out). The enzyme catalyses L-lysine(out) + L-arginine(in) = L-lysine(in) + L-arginine(out). Its function is as follows. Associates with SLC3A1 to form a functional transporter complex that mediates the electrogenic exchange between cationic amino acids and neutral amino acids, with a stoichiometry of 1:1. Has system b(0,+)-like activity with high affinity for extracellular cationic amino acids and L-cystine and lower affinity for intracellular neutral amino acids. Substrate exchange is driven by high concentration of intracellular neutral amino acids and the intracellular reduction of L-cystine to L-cysteine. Required for reabsorption of L-cystine and dibasic amino acids across the brush border membrane in renal proximal tubules. The polypeptide is b(0,+)-type amino acid transporter 1 (Slc7a9) (Mus musculus (Mouse)).